A 299-amino-acid chain; its full sequence is DNA-binding transcriptional repressor CapW (299 aa).

Positions 1–84 (MESSGSSKVR…EFKPITKRSE (84 aa)) are winged HTH domain. The interval 85 to 196 (ATRYLNELQR…IGRLDVLEHV (112 aa)) is WYL domain. The WYL domain maps to 120 to 200 (SRAIEADEVA…DVLEHVFSAK (81 aa)). The probable ligand-binding region stretch occupies residues 145–189 (YQSMDAPEPQEWVLSPHALGFDGLRWHARAWCHARQVFRDFAIGR). Positions 197–299 (FSAKPVDPLL…DRDGLQHLRR (103 aa)) are WCX domain.

Homodimer.

Its function is as follows. Transcriptional regulator of a CBASS antivirus system. CBASS (cyclic oligonucleotide-based antiphage signaling system) provides immunity against bacteriophage. The CD-NTase protein synthesizes cyclic nucleotides in response to infection; these serve as specific second messenger signals. The signals activate a diverse range of effectors, leading to bacterial cell death and thus abortive phage infection. A type III CBASS system, part of a CapW-Cap6-Cap8-Cap7-CdnC-NucC locus. Binds specifically to palindromes that overlap the -10 site in the promoter of cap6, found beween found between the genes for divergently transcribed capW and cap6 (cognate DNA). Probably represses transcription bidirectionally from the promoter. Mutations that make it a constitutive repressor in E.coli do not change DNA-binding affinity. This Stenotrophomonas maltophilia (Pseudomonas maltophilia) protein is DNA-binding transcriptional repressor CapW.